The primary structure comprises 405 residues: Polyadenylate-binding protein RBP45B (405 aa).

Positions 1 to 19 are enriched in pro residues; that stretch reads MMQQPPPGGILPHHAPPPS. Positions 1–54 are disordered; the sequence is MMQQPPPGGILPHHAPPPSAQQQYGYQQPYGIAGAAPPPPQMWNPQAAAPPSVQ. Over residues 20–35 the composition is skewed to low complexity; it reads AQQQYGYQQPYGIAGA. 3 RRM domains span residues 62 to 143, 155 to 234, and 261 to 333; these read RTLW…WASL, YTIF…PAAS, and TTVF…WGRS. A disordered region spans residues 379–405; the sequence is GGYQQTPQAGQQPPQQPPQQQQVGFSY. Positions 380-405 are enriched in low complexity; sequence GYQQTPQAGQQPPQQPPQQQQVGFSY.

It belongs to the polyadenylate-binding RBP45 family. As to quaternary structure, both isoform 1 and isoform 2 interact with poly(A)+ RNA in nucleus. In terms of tissue distribution, expressed in roots, leaves, stems, flowers, siliques, and seedlings. Present in immature anther tissues (tapetum cells) and mature pollen grains.

It localises to the nucleus. Functionally, heterogeneous nuclear ribonucleoprotein (hnRNP)-protein binding the poly(A) tail of mRNA and probably involved in some steps of pre-mRNA maturation. The polypeptide is Polyadenylate-binding protein RBP45B (RBP45B) (Arabidopsis thaliana (Mouse-ear cress)).